A 606-amino-acid chain; its full sequence is Pickpocket protein 28 (606 aa).

A disordered region spans residues 1-26 (MRTLTESRRRQSGSSGCKKDSESDDD). A run of 2 helical transmembrane segments spans residues 66–86 (IFFGLAFVLVVILSVFFISNV) and 490–510 (GLLGLFMGFSIFSVIEIFFYI).

The protein belongs to the amiloride-sensitive sodium channel (TC 1.A.6) family. In terms of tissue distribution, expressed in water-sensing neurons in taste bristles on the proboscis but not in carbonation-sensing taste peg neurons (at protein level). Expressed in the tracheal system.

It localises to the cell membrane. Functionally, osmosensitive ion channel that mediates the cellular and behavioral response to water. Plays an essential role in gustatory water reception. Part of a complex that plays a role in tracheal liquid clearance. Probable role in sodium transport. The polypeptide is Pickpocket protein 28 (ppk28) (Drosophila melanogaster (Fruit fly)).